The following is a 452-amino-acid chain: MILSKDIKLLPGSKVEVLIRVSKNIIQEKYKSLLQDYSSRLKIQGFRIGKVPINIIENKYSEGLKATVLEEVINGSFKEFFKEEPKRPLSYAAPTIKEKDLRLDLDKDFEFTFTYETYPEFEIPSVDSIDIKVEVPEVFIDDSDIDNEIRRLQIENSIIIEDEEGVVKKNSIVKVDFVELDDLLNEILSTKRQDFVFTVGKSETYYDFDRDVIGMRINEEKVLEKSYITDYKFEELAGSSRKLKIKIKSIKKRDLPLIDDEFAQDISDRYDTLDDLKNFIRSDILNVIEEKKEALKLNKFFSTISEKLEIDIPHSMIEAEIEIAFKDTAKQNKMGLEEFKSIFYSSGYVGSVNLKDKILSNLKSKLIIQKMVDLDPIEVTESDLEDEIARQSENSGMSCEEIKKFYEDQNLISYLKDDIKRKRVKKKILANLKELKGKQVSFKDFVNYKICE.

One can recognise a PPIase FKBP-type domain in the interval 170–256; sequence NSIVKVDFVE…IKSIKKRDLP (87 aa).

This sequence belongs to the FKBP-type PPIase family. Tig subfamily.

The protein localises to the cytoplasm. It catalyses the reaction [protein]-peptidylproline (omega=180) = [protein]-peptidylproline (omega=0). Its function is as follows. Involved in protein export. Acts as a chaperone by maintaining the newly synthesized protein in an open conformation. Functions as a peptidyl-prolyl cis-trans isomerase. The chain is Trigger factor from Borrelia garinii subsp. bavariensis (strain ATCC BAA-2496 / DSM 23469 / PBi) (Borreliella bavariensis).